We begin with the raw amino-acid sequence, 812 residues long: DNA gyrase subunit A (812 aa).

Positions 31–496 (IPDVRDGLKP…GNTDFNVEDV (466 aa)) constitute a Topo IIA-type catalytic domain. Residue Tyr119 is the O-(5'-phospho-DNA)-tyrosine intermediate of the active site. Residues 523–529 (QGRGGKG) carry the GyrA-box motif.

The protein belongs to the type II topoisomerase GyrA/ParC subunit family. In terms of assembly, heterotetramer, composed of two GyrA and two GyrB chains. In the heterotetramer, GyrA contains the active site tyrosine that forms a transient covalent intermediate with DNA, while GyrB binds cofactors and catalyzes ATP hydrolysis.

It is found in the cytoplasm. It catalyses the reaction ATP-dependent breakage, passage and rejoining of double-stranded DNA.. Its function is as follows. A type II topoisomerase that negatively supercoils closed circular double-stranded (ds) DNA in an ATP-dependent manner to modulate DNA topology and maintain chromosomes in an underwound state. Negative supercoiling favors strand separation, and DNA replication, transcription, recombination and repair, all of which involve strand separation. Also able to catalyze the interconversion of other topological isomers of dsDNA rings, including catenanes and knotted rings. Type II topoisomerases break and join 2 DNA strands simultaneously in an ATP-dependent manner. The chain is DNA gyrase subunit A from Kosmotoga olearia (strain ATCC BAA-1733 / DSM 21960 / TBF 19.5.1).